The following is a 91-amino-acid chain: Large ribosomal subunit protein bL31B (91 aa).

It belongs to the bacterial ribosomal protein bL31 family. Type B subfamily. As to quaternary structure, part of the 50S ribosomal subunit.

The protein is Large ribosomal subunit protein bL31B of Neisseria meningitidis serogroup C (strain 053442).